A 150-amino-acid chain; its full sequence is 3-dehydroquinate dehydratase (150 aa).

Tyr26 acts as the Proton acceptor in catalysis. 3 residues coordinate substrate: Asn77, His83, and Asp90. His103 functions as the Proton donor in the catalytic mechanism. Substrate contacts are provided by residues 104 to 105 (LS) and Arg114.

It belongs to the type-II 3-dehydroquinase family. As to quaternary structure, homododecamer.

It catalyses the reaction 3-dehydroquinate = 3-dehydroshikimate + H2O. It functions in the pathway metabolic intermediate biosynthesis; chorismate biosynthesis; chorismate from D-erythrose 4-phosphate and phosphoenolpyruvate: step 3/7. Functionally, catalyzes a trans-dehydration via an enolate intermediate. The chain is 3-dehydroquinate dehydratase from Pectobacterium carotovorum subsp. carotovorum (strain PC1).